Reading from the N-terminus, the 537-residue chain is Mitochondrial inner membrane magnesium transporter MRS2 (537 aa).

The transit peptide at 1-26 (MQSTLCLPVPSRSLLRFLRCQSKRAF) directs the protein to the mitochondrion. The tract at residues 79–112 (DPVTRKLPDRNQPLTSQNHFSTSRNAQGFWSGRK) is disordered. Residues 90-112 (QPLTSQNHFSTSRNAQGFWSGRK) show a composition bias toward polar residues. The next 2 membrane-spanning stretches (helical) occupy residues 425–445 (FSVGTLGLAMGTFLAGLYGMN) and 456–476 (GFAGVTGVSVVFSLIVCWYGL). The YGMN motif lies at 442–445 (YGMN).

It belongs to the CorA metal ion transporter (MIT) (TC 1.A.35) family. As to quaternary structure, homopentamer. Forms homooligomers. Interacts with MFM1.

It localises to the mitochondrion inner membrane. Its function is as follows. High-conductance magnesium-selective channel that mediates the influx of magnesium into the mitochondrial matrix. Essential for the splicing of mRNA group II introns in mitochondria by affecting mitochondrial magnesium concentrations, which are critical for group II intron splicing. It also suppresses a variety of mitochondrial intron mutations and its absence may disturb the assembly of mitochondrial membrane complexes. The sequence is that of Mitochondrial inner membrane magnesium transporter MRS2 (MRS2) from Gibberella zeae (strain ATCC MYA-4620 / CBS 123657 / FGSC 9075 / NRRL 31084 / PH-1) (Wheat head blight fungus).